The primary structure comprises 509 residues: Transmembrane protein 102 (509 aa).

Over 1–312 (MASTVWGGAP…VLLATPEPPR (312 aa)) the chain is Extracellular. The disordered stretch occupies residues 167 to 236 (PPVPEESDMT…NPETPEPLET (70 aa)). The span at 174–204 (DMTHQTHSKESPTDRENSVDPSHDYVPEPEP) shows a compositional bias: basic and acidic residues. The span at 207–224 (SLQKSSSDLSESQSSYKD) shows a compositional bias: low complexity. The chain crosses the membrane as a helical span at residues 313-329 (HLLLFDLIPVVTVTGWP). Topologically, residues 330–509 (DTARSHSWAG…GLAGVGGGTH (180 aa)) are cytoplasmic.

Interacts with CSF2RB; this interaction occurs preferentially in the absence of CSF2.

It is found in the cell membrane. Functionally, selectively involved in CSF2 deprivation-induced apoptosis via a mitochondria-dependent pathway. This Mus musculus (Mouse) protein is Transmembrane protein 102 (Tmem102).